Consider the following 8525-residue polypeptide: Nebulin (8525 aa).

Positions 34-70 (TTTTRTSDYEQSETSKPALAQPALAQPASAKPVERRK) are disordered. Low complexity predominate over residues 48–64 (SKPALAQPALAQPASAK). Nebulin repeat units lie at residues 83–110 (TPYIAHSQKMQDLFSPNKYKEKFEKTKG), 112–146 (PYASTTDTPELRRIKKVQDQLSEVKYRMDGDVAKT), 156–181 (DIEHAKKVSQQVSKVLYKQNWEDTKD), 182–216 (KYLLPPDAPELVQAVKNTAMFSKKLYTEDWEADKS), 217–251 (LFYPYNDSPELRRVAQAQKALSDVAYKKGLAEQQA), 252–286 (QFTPLADPPDIEFAKKVTNQVSKQKYKEDYENKIK), 296–321 (EVANARMNADNISTRKYQEDFENMKD), 323–357 (IYFMQTETPEYKMNKKAGVAASKVKYKEDYEKNKG), 362–396 (NVLPASENPQLRQLKAAGDALSDKLYKENYEKTKA), 403–431 (ETPKFKLDTVLQNFSSDKKYKDSYLKDIL), 433–467 (HYVGSFEDPYHSHCMKVTAQNSDKNYKAEYEEDRG), 501–535 (KFTQVTDSPVLLQAQVNSKQLSDLNYKAKHESEKF), 536–570 (KCHIPPDTPAFIQHKVNAYNLSDNLYKQDWEKSKA), 572–606 (KFDIKVDAIPLLAAKANTKNTSDVMYKKDYEKNKG), 610–644 (GVLSINDDPKMLHSLKVAKNQSDRLYKENYEKTKA), 680–714 (HYVGSMEDPYHTHCMKVAAQNSDKSYKAEYEEDKG), 748–782 (KFTAVTDSPVLLQAQLNTKQLSDLNYKAKHEGEKF), 783–817 (KCHIPADAPQFIQHRVNAYNLSDNVYKQDWEKSKA), 819–853 (KFDIKVDAIPLLAAKANTKNTSDVMYKKDYEKSKG), 857–891 (GALSINDDPKMLHSLKTAKNQSDREYRKDYEKSKT), 892–918 (IYTAPLDMLQVTQAKKSQAIASDVDYK), 923–957 (SYSYPPDSINVDLAKKAYALQSDVEYKADYNSWMK), 968–986 (EMEKAKRASDILNEKKYRQ), 992–1026 (KFTSIEDAPITVQSKINQAQRSDIAYKAKGEEIIH), 1027–1061 (KYNLPPDLPQFIQAKVNAYNISENMYKADLKDLSK), 1063–1097 (GYDLRTDAIPIRAAKAARQAASDVQYKKDYEKAKG), 1101–1135 (GFQSLQDDPKLVHYMNVAKIQSDREYKKDYEKTKS), 1136–1166 (KYNTPHDMFNVVAAKKAQDVVSNVNYKHSLH), 1167–1201 (HYTYLPDAMDLELSKNMMQIQSDNVYKEDYNNWMK), 1212–1230 (DVEKVKKAGDALNEKKYRQ), 1236–1270 (KFTSIVDSPVMVQAKQNTKQVSDILYKAKGEDVKH), 1271–1305 (KYTMSPDLPQFLQAKCNAYNISDVCYKRDWYDLIA), 1307–1341 (GNNVLGDAIPITAAKASRNIASDYKYKEAYEKSKG), 1345–1379 (GFRSLQDDPKLVHYMNVAKLQSDREYKKNYENTKT), 1380–1407 (SYHTPGDMVSITAAKMAQDVATNVNYKQ), 1411–1445 (HYTYLPDAMSLEHTRNVNQIQSDNVYKDEYNSFLK), 1456–1474 (EVEKVKKAGDALNERKYRQ), 1480–1514 (KFTSVPDSMGMVLAQHNTKQLSDLNYKVEGEKLKH), 1515–1549 (KYTIDPELPQFIQAKVNALNMSDAHYKADWKKTIA), 1551–1585 (GYDLRPDAIPIVAAKSSRNIASDCKYKEAYEKAKG), 1589–1623 (GFLSLQDDPKLVHYMNVAKIQSDREYKKGYEASKT), 1624–1654 (KYHTPLDMVSVTAAKKSQEVATNANYRQSYH), 1655–1689 (HYTLLPDALNVEHSRNAMQIQSDNLYKSDFTNWMK), 1697–1725 (ESLEVEKAKKAGEILSEKKYRQHPEKLKF), 1730–1758 (DTMEQALNKSNKLNMDKRLYTEKWNKDKT), 1759–1793 (TIHVMPDTPDILLSRVNQITMSDKLYKAGWEEEKK), 1795–1829 (GYDLRPDAIAIKAARASRDIASDYKYKKAYEQAKG), 1833–1867 (GFRSLEDDPKLVHFMQVAKMQSDREYKKGYEKSKT), 1868–1894 (SFHTPVDMLSVVAAKKSQEVATNANYR), 1899–1933 (TYNMLPDAMSFELAKNMMQIQSDNQYKADYADFMK), 1949–1962 (KKAMEIISEKKYRQ), 1968–2002 (KYSTLMDSMNMVLAQNNAKIMNEHLYKQAWEADKT), 2003–2037 (KVHIMPDIPQIILAKANAINMSDKLYKLSLEESKK), 2039–2073 (GYDLRPDAIPIKAAKASRDIASDYKYKYNYEKGKG), 2077–2111 (GFRSLEDDPKLVHSMQVAKMQSDREYKKNYENTKT), 2112–2138 (SYHTPADMLSVTAAKDAQANITNTNYK), 2143–2177 (KYILLPDAMNIELTRNMNRIQSDNEYKQDYNEWYK), 2188–2206 (EVEKAKKATEYASDQKYRQ), 2212–2246 (QFKKLTDSMDMVLAKQNAHTMNKHLYTIDWNKDKT), 2247–2281 (KIHVMPDTPDILQAKQNQTLYSQKLYKLGWEEALK), 2283–2317 (GYDLPVDAISVQLAKASRDIASDYKYKQGYRKQLG), 2321–2355 (GFRSLQDDPKLVLSMNVAKMQSEREYKKDFEKWKT), 2356–2382 (KFSSPVDMLGVVLAKKCQELVSDVDYK), 2387–2421 (QWTCLPDQNDVVQAKKVYELQSENLYKSDLEWLRG), 2436–2449 (KRASEIISEKKYRQ), 2455–2489 (KFTSIPDAMDIVLAKTNAKNRSDRLYREAWDKDKT), 2490–2524 (QIHIMPDTPDIVLAKANLINTSDKLYRMGYEELKR), 2526–2560 (GYDLPVDAIPIKAAKASREIASEYKYKEGFRKQLG), 2564–2598 (GARNIEDDPKMMWSMHVAKIQSDREYKKDFEKWKT), 2599–2625 (KFSSPVDMLGVVLAKKCQTLVSDVDYK), 2630–2664 (QWTCLPDQSDVIHARQAYDLQSDNLYKSDLQWLKG), 2679–2692 (KRATQILSDHVYRQ), 2698–2732 (KFSSLMDSIPMVLAKNNAITMNHRLYTEAWDKDKT), 2733–2767 (TVHIMPDTPEVLLAKQNKVNYSEKLYKLGLEEAKR), 2769–2803 (GYDMRVDAIPIKAAKASRDIASEFKYKEGYRKQLG), 2807–2841 (GARAIRDDPKMMWSMHVAKIQSDREYKKDFEKWKT), 2842–2868 (KFSSPVDMLGVVLAKKCQTLVSDVDYK), 2873–2907 (QWTCLPDQSDVIHARQAYDLQSDNMYKSDLQWMRG), 2917–2935 (DVEKCKRATEILSDKIYRQ), 2941–2975 (KFTSVTDSLEQVLAKNNAITMNKRLYTEAWDKDKT), 2976–3010 (QIHIMPDTPEIMLARMNKINYSESLYKLANEEAKK), 3012–3046 (GYDLRSDAIPIVAAKASRDIISDYKYKDGYCKQLG), 3050–3084 (GARNIEDDPKMMWSMHVAKIQSDREYKKDFEKWKT), 3085–3111 (KFSSPVDMLGVVLAKKCQTLVSDVDYK), 3116–3150 (EWTCLPDQSDVIHARQAYDLQSDNIYKSDLQWLRG), 3158–3178 (SMDVVKCKRATEILSDNIYRQ), 3184–3218 (KFTSVTDSLEQVLAKNNALNMNKRLYTEAWDKDKT), 3219–3253 (QIHIMPDTPEIMLARQNKINYSETLYKLANEEAKK), 3255–3289 (GYDLRSDAIPIVAAKASRDVISDYKYKDGYRKQLG), 3293–3327 (GARNIEDDPKMMWSMHVAKIQSDREYKKDFEKWKT), 3328–3354 (KFSSPVDMLGVVLAKKCQTLVSDVDYK), 3359–3393 (EWTCLPDQNDVIHARQAYDLQSDNIYKSDLQWLRG), 3401–3421 (SMDVVKCKRAAEILSDNIYRQ), 3427–3461 (KFTSVTDSLEQVLAKNNALNMNKRLYTEAWDKDKT), 3462–3496 (QVHIMPDTPEIMLARQNKINYSESLYRQAMEEAKK), 3498–3532 (GYDLRSDAIPIVAAKASRDIASDYKYKEAYRKQLG), 3536–3570 (GARAVHDDPKIMWSLHIAKVQSDREYKKDFEKYKT), 3571–3597 (RYSSPVDMLGIVLAKKCQTLVSDVDYK), 3602–3636 (EWICLPDQNDIIHARKAYDLQSDNLYKSDLEWMKG), 3643–3664 (DSLEVVRAKRAGELLSDTIYRQ), 3670–3704 (KFTSITDTPEQVLAKNNALNMNKRLYTEAWDNDKK), 3705–3739 (TIHVMPDTPEIMLAKLNRINYSDKLYKLALEESKK), 3741–3775 (GYDLRLDAIPIQAAKASRDIASDYKYKEGYRKQLG), 3779–3813 (GARNIKDDPKMMWSIHVAKIQSDREYKKEFEKWKT), 3814–3840 (KFSSPVDMLGVVLAKKCQILVSDIDYK), 3845–3879 (EWTCLPDQNDVIQARKAYDLQSDAIYKSDLEWLRG), 3889–3907 (EVEKVKRAGEILSDRKYRQ), 3913–3947 (KFTCITDTPEIVLAKNNALTMSKHLYTEAWDADKT), 3948–3982 (SIHVMPDTPDILLAKSNSANISQKLYTKGWDESKM), 3984–4018 (DYDLRADAISIKSAKASRDIASDYKYKEAYEKQKG), 4022–4056 (GAQSIEDDPKIMCAIHAGKIQSEREYKKEFQKWKT), 4057–4083 (KFSSPVDMLSILLAKKCQTLVTDIDYR), 4088–4122 (EWTCMPDQNDIIQAKKAYDLQSDSVYKADLEWLRG), 4132–4149 (EMNRVKVAQDLVNERLYR), 4156–4190 (SFTSIVDTPEVVLAKANSLQISEKLYQEAWNKDKS), 4191–4225 (NITIPSDTPEMLQAHINALQISNKLYQKDWNDAKQ), 4227–4261 (GYDIRADAIEIKHAKASREIASEYKYKEGYRKQLG), 4265–4299 (GFRTLQDDPKSVWAIHAAKIQSDREYKKAYEKSKG), 4300–4326 (IHNTPLDMMSIVQAKKCQVLVSDIDYR), 4331–4365 (QWTCLPDQNDVIQAKKAYDLQSDNLYKSDLEWLKG), 4375–4392 (EVMRVKNAQNLLNERLYR), 4399–4433 (KFTSIVDTPEVIQAKINAVQISEPLYRDAWEKEKA), 4434–4468 (NVNVPADTPLMLQSKINALQISNKRYQQAWEDVKM), 4470–4504 (GYDLRADAIGIQHAKASRDIASDYLYKTAYEKQKG), 4508–4542 (GCRSAKEDPKLVWAANVLKMQNDRLYKKAYNDHKA), 4543–4569 (KISIPVDMVSISAAKEGQALASDVDYR), 4574–4608 (HWSCFPDQNDVIQARKAYDLQSDSVYKADLEWLRG), 4618–4635 (EMNRVKVAQDLVNERLYR), 4642–4676 (SFTSIVDTPEVVLAKANSLQISEKLYQEAWNKDKS), 4677–4711 (NITIPSDTPEMLQAHINALQISNKLYQKDWNDTKQ), 4713–4747 (GYDIRADAIEIKHAKASREIASEYKYKEGYRKQLG), 4751–4785 (GFRTLQDDPKSVWAIHAAKIQSDREYKKAYEKSKG), 4786–4812 (IHNTPLDMMSIVQAKKCQVLVSDIDYR), 4817–4851 (QWTCLPDQNDVIQAKKAYDLQSDNLYKSDLEWLKG), 4861–4878 (EVMRVKNAQNLLNERLYR), 4885–4919 (KFTSIVDTPEVIQAKINAVQISEPLYRNAWEKEKA), 4920–4954 (NVNVPADTPLMLQSKINALQISNKRYQQAWEDVKM), 4956–4990 (GYDLRADAIGIQHAKASRDIASDYLYKTAYEKQKG), 4994–5028 (GCRSAKEDPKLVWAANVLKMQNDRLYKKAYNDHKA), 5029–5055 (KISIPVDMVSISAAKEGQALASDVDYR), 5060–5094 (HWSCFPDQNDVIQARKAYDLQSDSVYKADLEWLRG), 5104–5121 (EMNRVKVAQDLVNERLYR), 5128–5162 (SFTSIVDTPEVVLAKANSLQISEKLYQEAWNKDKS), 5163–5197 (NITIPSDTPEMLQAHINALQISNKLYQKDWNDTKQ), 5199–5233 (GYDIRADAIEIKHAKASREIASEYKYKEGYRKQLG), 5237–5271 (GFRTLQDDPKSVWAIHAAKIQSDREYKKAYEKSKG), 5272–5298 (IHNTPLDMMSIVQAKKCQVLVSDIDYR), 5303–5337 (QWTCLPDQNDVIQAKKAYDLQSDNLYKSDLEWLKG), 5347–5364 (EVMRVKNAQNLLNERLYR), 5371–5405 (KFTSIVDTPEVIQAKINAVQISEPLYRDAWEKEKA), 5406–5440 (NVNVPADTPLMLQSKINALQISNKRYQQAWEDVKM), 5442–5476 (GYDLRADAIGIQHAKASRDIASDYLYKTAYEKQKG), 5480–5514 (GCRSAKEDPKLVWAANVLKMQNDRLYKKAYNDHKA), 5515–5541 (KISIPVDMVSISAAKEGQALASDVDYR), 5546–5580 (RWSCFPDQNDVIQARKAYDLQSDALYKADLEWLRG), 5588–5607 (SPEVLRVKNAQNIFCDSVYR), 5614–5648 (KYTSIVDTPEVVLAKSNAENISIPKYREVWDKDKT), 5649–5683 (SIHIMPDTPEINLARANALNVSNKLYREGWDEMKA), 5690–5718 (DAIPIQAAKASREIASDYKYKLDHEKQKG), 5722–5756 (GTLTARDDNKIRWALIADKLQNEREYRLDWAKWKA), 5757–5783 (KIQSPVDMLSILHSKNSQALVSDMDYR), 5788–5822 (QWTCMPDQNDVIQAKKAYELQSDNVYKADLEWLRG), 5829–5853 (DSVSVNHAKHAADIFSEKKYRTKIE), 5856–5890 (NFTPVDDRVDYVTAKQSGEILDDIKYRKDWNATKS), 5893–5924 (TLTETPLLHTAQEAARILDQYLYKEGWERQKA), 5926–5960 (GYILPPDAVPFVHAHHCNDVQSELKYKAEHVKQKG), 5964–5998 (GVPTMRDDPKLVWFEHAGQIQNERLYKEDYHKTKA), 5999–6025 (KINIPADMVSVLAAKQGQTLVSDIDYR), 6030–6064 (QWMCHPDQNDVIQARKAYDLQSDNVYRADLEWLRG), 6071–6099 (DSVDHVRVTKNQEMMSQIKYKKNALENYP), 6100–6134 (NFRSVVDPPEIVLAKINSVNQSDVKYKETFNKAKG), 6135–6169 (KYTFSPDTPHISHSKDMGKLYSTILYKGAWEGTKA), 6171–6205 (GYTLDERYIPIVGAKHADLVNSELKYKETYEKQKG), 6209–6243 (AGKVIGEFPGVVHCLDFQKMRSALNYRKHYEDTKA), 6244–6274 (NVHIPNDMMNHVLAKRCQYILSDLEYRHYFH), 6275–6309 (QWTSLLEEPNVIRVRNAQEILSDNVYKDDLNWLKG), 6316–6344 (DTPQILHAKKSYDLQSQLQYTAAGKENLQ), 6345–6379 (NYNLVTDTPLYVTAVQSGINASEVKYKENYHQIKD), 6380–6414 (KYTTVLETVDYDRTRNLKNLYSSNLYKEAWDRVKA), 6416–6450 (SYILPSSTLSLTHAKNQKHLASHIKYREEYEKFKA), 6458–6488 (VDDDPNTARCLRVGKLNIDRLYRSVYEKNKM), 6489–6515 (KIHIVPDMVEMVTAKDSQKKVSEIDYR), 6532–6554 (HVRKVTDQISDIVYKDDLNWLKG), 6561–6589 (DTPEILHAKHAYDLRDDIKYKAHMLKTRN), 6590–6624 (DYKLVTDTPVYVQAVKSGKQLSDAVYHYDYVHSVR), 6626–6660 (KVAPTTKTVDLDRALHAYKLQSSNLYKTSLRTLPT), 6661–6695 (GYRLPGDTPHFKHIKDTRYMSSYFKYKEAYEHTKA), 6697–6731 (GYTLGPKDVPFVHVRRVNNVTSERLYRELYHKLKD), 6732–6766 (KIHTTPDTPEIRQVKKTQEAVSELIYKSDFFKMQG), 6767–6801 (HMISLPYTPQVIHCRYVGDITSDIKYKEDLQVLKG), 6808–6836 (DTPDMVRSRHLRKLWSNYLYTDKARKMRD), 6837–6871 (KYKVVLDTPEYRKVQELKTHLSELVYRAAGKKQKS), 6872–6906 (IFTSVPDTPDLLRAKRGQKLQSQYLYVELATKERP), 6907–6941 (HHHAGNQTTALKHAKDVKDMVSEKKYKIQYEKMKD), 6942–6976 (KYTPVPDTPILIRAKRAYWNASDLRYKETFQKTKG), 6977–7011 (KYHTVKDALDIVYHRKVTDDISKIKYKENYMSQLG), 7012–7046 (IWRSIPDRPEHFHHRAVTDTVSDVKYKEDLTWLKG), 7053–7081 (DTPDFTLAEKNKTLYSKYKYKEVFERTKS), 7082–7110 (DFKYVADSPINRHFKYATQLMNERKYKSS), 7125–7151 (PDMLTALYNSHMWSQIKYRKNYEKSKD), 7152–7186 (KFTSIVDTPEHLRTTKVNKQISDILYKLEYNKAKP), 7188–7222 (GYTTIHDTPMLLHVRKVKDEVSDLKYKEVYQRNKS), 7223–7257 (NCTIEPDAVHIKAAKDAYKVNTNLDYKKQYEANKA), 7258–7292 (HWKWTPDRPDFLQAAKSSLQQSDFEYKLDREFLKG), 7297–7327 (VTDDKNTVLALRNTLIESDLKYKEKHVKERG), 7328–7362 (TCHAVPDTPQILLAKTVSNLVSENKYKDHVKKHLA), 7365–7399 (SYTTLPETRDTVHVKEVTKHVSDTNYKKKFVKEKG), 7402–7433 (NYSIMLEPPEVKHAMEVAKKQSDVAYRKDAKE), 7436–7470 (HYTTVADRPDIKKATQAAKQASEVEYRAKHRKEGS), 7479–7505 (PDIEMAKKAAKLSSQVKYRENFDKEKG), 7514–7542 (DSQLYKVMKDANNLASEVKYKADLKKLHK), 7543–7577 (PVTDMKESLIMNHVLNTSQLASSYQYKKKYEKSKG), 7578–7612 (HYHTIPDNLEQLHLKEATELQSIVKYKEKYEKERG), 7619–7647 (ETPTYITAKESQQMQSGKEYRKDYEESIK), 7650–7684 (NLTGLEVTPALLHVKYATKIASEKEYRKDLEESIR), 7687–7721 (GLTEMEDTPDMLRAKNATQILNEKEYKRDLELEVK), 7731–7759 (ETPDFMRARNATDIASQIKYKQSAEMEKA), 7760–7794 (NFTSVVDTPEIIHAQQVKNLSSQKKYKEDAEKSMS), 7795–7829 (YYETVLDTPEIQRVRENQKNFSLLQYQCDLKNSKG), 7830–7864 (KITVVQDTPEILRVKENQKNFSSVLYKEDVSPGTA), 7867–7888 (KTPEMMRVKQTQDHISSVKYKE), 7892–7921 (QGTPIPDLPEVKRVKETQKHISSVMYKENL), 7930–7957 (TPEIERVKRNQENFSSVLYKENLGKGIP), 7961–7988 (TPEMERVKRNQENFSSILYKENLSKGTP), 7992–8013 (TPEMERVKLNQENFSSVLYKEN), 8016–8045 (KGIPIPITPEMERVKHNQENFSSVLYKENL), 8054–8075 (TPEMQRVKHNQENLSSVLYKEN), 8078–8112 (KGTPLPVTPEMERVKHNQENISSVLYKENMGKGTP), 8116–8143 (TPEMERVKHNQENISSVLYKENMGKGTP), 8147–8168 (TPEMERVKHNQENISSVLYKEN), 8171–8205 (KATATPVTPEMQRVKRNQENISSVLYKENLGKATP), 8209–8232 (TPEMERVKRNQENFSSVLYKENMR), 8233–8267 (KATPTPVTPEMERAKRNQENISSVLYSDSFRKQIQ), 8269–8303 (KAAYVLDTPEMRRVRETQRHISTVKYHEDFEKHKG), and 8304–8330 (CFTPVVTDPITERVKKNMQDFSDINYR). The segment at 8313–8468 (ITERVKKNMQ…SIPSHPSTAG (156 aa)) is interaction with SVIL. Disordered stretches follow at residues 8385–8422 (QAQRRSREQSRSASALSISGGEEKSEHSEAPDHHLSTY) and 8439–8463 (TTELPQQRSSSVATQQTTVSSIPSH). Over residues 8405-8419 (GEEKSEHSEAPDHHL) the composition is skewed to basic and acidic residues. Positions 8444–8459 (QQRSSSVATQQTTVSS) are enriched in low complexity. Positions 8466–8525 (TAGKIFRAMYDYMAADADEVSFKDGDAIINVQAIDEGWMYGTVQRTGRTGMLPANYVEAI) constitute an SH3 domain.

Monomer and homooligomer. Interacts with TTN/titin. Interacts with SVIL. Interacts (via nebulin repeats 160-164) with DES. In terms of tissue distribution, expressed in skeletal muscle (at protein level). Located in the thin filament of striated muscle.

It localises to the cytoplasm. The protein localises to the myofibril. Its subcellular location is the sarcomere. It is found in the cytoskeleton. This giant muscle protein may be involved in maintaining the structural integrity of sarcomeres and the membrane system associated with the myofibrils. Binds and stabilize F-actin. This Homo sapiens (Human) protein is Nebulin (NEB).